Reading from the N-terminus, the 198-residue chain is Na(+)-translocating NADH-quinone reductase subunit E (198 aa).

A run of 6 helical transmembrane segments spans residues 11 to 31, 35 to 55, 77 to 97, 109 to 129, 140 to 160, and 176 to 196; these read AVFVENMALAFFLGMCTFLAV, VSTAFGLGIAVTVVLGISVPA, FLNFITFIGVIAAIVQVLEMI, LGIFLPLITVNCAIFGGVSFM, IVYGFGSGIGWMLAIVALAGI, and LGITFITTGLMALGFMSFSGV.

Belongs to the NqrDE/RnfAE family. As to quaternary structure, composed of six subunits; NqrA, NqrB, NqrC, NqrD, NqrE and NqrF.

The protein localises to the cell inner membrane. The catalysed reaction is a ubiquinone + n Na(+)(in) + NADH + H(+) = a ubiquinol + n Na(+)(out) + NAD(+). In terms of biological role, NQR complex catalyzes the reduction of ubiquinone-1 to ubiquinol by two successive reactions, coupled with the transport of Na(+) ions from the cytoplasm to the periplasm. NqrA to NqrE are probably involved in the second step, the conversion of ubisemiquinone to ubiquinol. This chain is Na(+)-translocating NADH-quinone reductase subunit E, found in Yersinia enterocolitica serotype O:8 / biotype 1B (strain NCTC 13174 / 8081).